Here is a 180-residue protein sequence, read N- to C-terminus: UPF0227 protein Spro_1925 (180 aa).

This sequence belongs to the UPF0227 family.

This Serratia proteamaculans (strain 568) protein is UPF0227 protein Spro_1925.